Consider the following 398-residue polypeptide: S-adenosylmethionine synthase (398 aa).

Histidine 17 contributes to the ATP binding site. Position 19 (aspartate 19) interacts with Mg(2+). A K(+)-binding site is contributed by glutamate 45. Residues glutamate 58 and glutamine 101 each coordinate L-methionine. Residues 101-111 (QSPDIAQGVDK) are flexible loop. ATP-binding positions include 176 to 178 (DGK), 243 to 244 (RF), aspartate 252, 258 to 259 (RK), and lysine 279. Residue aspartate 252 coordinates L-methionine. Lysine 283 lines the L-methionine pocket.

The protein belongs to the AdoMet synthase family. Homotetramer; dimer of dimers. Mg(2+) is required as a cofactor. Requires K(+) as cofactor.

It is found in the cytoplasm. The enzyme catalyses L-methionine + ATP + H2O = S-adenosyl-L-methionine + phosphate + diphosphate. Its pathway is amino-acid biosynthesis; S-adenosyl-L-methionine biosynthesis; S-adenosyl-L-methionine from L-methionine: step 1/1. Catalyzes the formation of S-adenosylmethionine (AdoMet) from methionine and ATP. The overall synthetic reaction is composed of two sequential steps, AdoMet formation and the subsequent tripolyphosphate hydrolysis which occurs prior to release of AdoMet from the enzyme. The polypeptide is S-adenosylmethionine synthase (Staphylococcus haemolyticus (strain JCSC1435)).